A 473-amino-acid polypeptide reads, in one-letter code: 23S rRNA (uracil(1939)-C(5))-methyltransferase RlmD (473 aa).

The tract at residues 6–27 is disordered; sequence KPSKGKNKSNVKGRVRGAGSGE. The segment covering 8-20 has biased composition (basic residues); sequence SKGKNKSNVKGRV. Residues 42–99 enclose the TRAM domain; it reads DDINAANEAVTIDGMDWQGQGVARGDTLYFVDGALPGETVEIKALSSNKQIVNAKVTK. Residues Cys112, Cys118, Cys121, and Cys199 each coordinate [4Fe-4S] cluster. Gln304, Phe333, Asn338, Glu354, Asp381, and Asp402 together coordinate S-adenosyl-L-methionine. The active-site Nucleophile is Cys428.

It belongs to the class I-like SAM-binding methyltransferase superfamily. RNA M5U methyltransferase family. RlmD subfamily.

The enzyme catalyses uridine(1939) in 23S rRNA + S-adenosyl-L-methionine = 5-methyluridine(1939) in 23S rRNA + S-adenosyl-L-homocysteine + H(+). Catalyzes the formation of 5-methyl-uridine at position 1939 (m5U1939) in 23S rRNA. The sequence is that of 23S rRNA (uracil(1939)-C(5))-methyltransferase RlmD from Alteromonas naphthalenivorans.